Here is a 100-residue protein sequence, read N- to C-terminus: NADH-quinone oxidoreductase subunit K (100 aa).

3 consecutive transmembrane segments (helical) span residues 3–23 (PTSY…VGVI), 29–49 (LVLF…LVTF), and 60–80 (IVVF…LALL).

It belongs to the complex I subunit 4L family. NDH-1 is composed of 14 different subunits. Subunits NuoA, H, J, K, L, M, N constitute the membrane sector of the complex.

The protein localises to the cell membrane. It catalyses the reaction a quinone + NADH + 5 H(+)(in) = a quinol + NAD(+) + 4 H(+)(out). Its function is as follows. NDH-1 shuttles electrons from NADH, via FMN and iron-sulfur (Fe-S) centers, to quinones in the respiratory chain. The immediate electron acceptor for the enzyme in this species is believed to be ubiquinone. Couples the redox reaction to proton translocation (for every two electrons transferred, four hydrogen ions are translocated across the cytoplasmic membrane), and thus conserves the redox energy in a proton gradient. The chain is NADH-quinone oxidoreductase subunit K from Roseiflexus castenholzii (strain DSM 13941 / HLO8).